We begin with the raw amino-acid sequence, 676 residues long: DNA ligase (676 aa).

NAD(+) contacts are provided by residues 32–36, 81–82, and Glu-113; these read DAEYD and SL. Lys-115 (N6-AMP-lysine intermediate) is an active-site residue. NAD(+) contacts are provided by Arg-136, Glu-173, Lys-291, and Lys-315. Zn(2+)-binding residues include Cys-409, Cys-412, Cys-427, and Cys-433. The region spanning 595–676 is the BRCT domain; the sequence is SEKTYFFNKK…LNSLIRIKEQ (82 aa).

The protein belongs to the NAD-dependent DNA ligase family. LigA subfamily. Mg(2+) is required as a cofactor. Requires Mn(2+) as cofactor.

It catalyses the reaction NAD(+) + (deoxyribonucleotide)n-3'-hydroxyl + 5'-phospho-(deoxyribonucleotide)m = (deoxyribonucleotide)n+m + AMP + beta-nicotinamide D-nucleotide.. DNA ligase that catalyzes the formation of phosphodiester linkages between 5'-phosphoryl and 3'-hydroxyl groups in double-stranded DNA using NAD as a coenzyme and as the energy source for the reaction. It is essential for DNA replication and repair of damaged DNA. The sequence is that of DNA ligase from Buchnera aphidicola subsp. Acyrthosiphon pisum (strain Tuc7).